Here is a 173-residue protein sequence, read N- to C-terminus: Thiol-disulfide oxidoreductase ResA (173 aa).

Residues 10–29 traverse the membrane as a helical; Signal-anchor for type II membrane protein segment; the sequence is VIILLILCGAVGFTLYQGYF. A Thioredoxin domain is found at 35–173; the sequence is MEIGKEAPNF…LEEYLKKITP (139 aa). Cys73 and Cys76 form a disulfide bridge.

This sequence belongs to the thioredoxin family. ResA subfamily.

The protein localises to the cell membrane. It participates in protein modification; cytochrome c assembly. Its function is as follows. Thiol-disulfide oxidoreductase which is required in disulfide reduction during c-type cytochrome synthesis. May accept reducing equivalents from CcdA, leading to breakage of disulfide bonds in apocytochrome c; following this reduction heme can be covalently attached. The sequence is that of Thiol-disulfide oxidoreductase ResA from Bacillus thuringiensis subsp. konkukian (strain 97-27).